The sequence spans 197 residues: Small ribosomal subunit protein uS4c (197 aa).

The region spanning 84 to 143 (MRLDNIIFQLGMASTIPAARQLVCHRHILVNHRVVDIPSYRCKPRDIISIRNRPTSANAL) is the S4 RNA-binding domain.

The protein belongs to the universal ribosomal protein uS4 family. As to quaternary structure, part of the 30S ribosomal subunit. Contacts protein S5. The interaction surface between S4 and S5 is involved in control of translational fidelity.

It is found in the plastid. The protein resides in the chloroplast. One of the primary rRNA binding proteins, it binds directly to 16S rRNA where it nucleates assembly of the body of the 30S subunit. In terms of biological role, with S5 and S12 plays an important role in translational accuracy. This chain is Small ribosomal subunit protein uS4c (rps4), found in Adiantum capillus-veneris (Maidenhair fern).